Here is a 363-residue protein sequence, read N- to C-terminus: Spore germination protein YndE (363 aa).

A run of 10 helical transmembrane segments spans residues Ile-8–Thr-28, Asp-41–Ala-61, Leu-84–Val-104, Phe-113–Leu-133, Met-149–Phe-169, Val-189–Met-209, Ala-218–Ile-238, Phe-273–Ala-293, Pro-305–Asn-325, and Thr-335–Ser-355.

Belongs to the amino acid-polyamine-organocation (APC) superfamily. Spore germination protein (SGP) (TC 2.A.3.9) family.

The protein localises to the cell membrane. In terms of biological role, involved in the germinative response to L-alanine. Could be an amino acid transporter. This is Spore germination protein YndE (yndE) from Bacillus subtilis (strain 168).